The chain runs to 344 residues: Cycloartenol-C-24-methyltransferase 1 (344 aa).

Belongs to the class I-like SAM-binding methyltransferase superfamily. Erg6/SMT family.

The catalysed reaction is zymosterol + S-adenosyl-L-methionine = fecosterol + S-adenosyl-L-homocysteine + H(+). It participates in steroid biosynthesis; sterol biosynthesis. Catalyzes the methyl transfer from S-adenosyl-methionine to the C-24 of cycloartenol to form 24-methylene cycloartenol. The polypeptide is Cycloartenol-C-24-methyltransferase 1 (Smt1-1) (Oryza sativa subsp. japonica (Rice)).